The following is a 194-amino-acid chain: Putative 3-methyladenine DNA glycosylase (194 aa).

This sequence belongs to the DNA glycosylase MPG family.

The polypeptide is Putative 3-methyladenine DNA glycosylase (Mycolicibacterium fortuitum (Mycobacterium fortuitum)).